Here is a 457-residue protein sequence, read N- to C-terminus: MMGDLTTSFPATTLTTNEQPHVVVCSGAGMGHLIPFLNLASTLSSAPYRCKVTLLIVIPLITDAESHHISSFFSSHPTIHRLDFHVNLPAPKPNVDPFFLRYKSISDSAHRLPVHLSTLAPPISAVFSDFLFTQGLNTTLPHLPNYTFTTTSARFFTLMSYVPHLAKSSSSSPVEIPGLEPFPTDNIPPPFFNPDHIFTSFTISNANYLSLSKGIIVNTFDSFEPETLSALNSGDSLPDLPPVIPIGPLNELEHNKQEELLPWLDQQPEKSVLYVSFGNRTAMSSDQILELGMGLERSDCRFIWVVKTSKIDKDDKSELRKLFGEELYVKLSEKGKLVKWVNQTEILGHTAVGGFLSHCGWNSVMEAARRGVPILAWPQHGDQRENAWVVEKAGLGVWEREWSSGIQVAIVEKVKMIMGNNDLRNSAVRVGEEAKRACDVGGSSATALMNIIGSLKR.

His32 acts as the Proton acceptor in catalysis. Residue His32 coordinates an anthocyanidin. The active-site Charge relay is Asp129. Thr150 lines the UDP-alpha-D-glucose pocket. Positions 279–280 are UDP; that stretch reads NR. Residues Val341, Gln343, His358, Trp361, Asn362, Ser363, and Glu366 each coordinate UDP-alpha-D-glucose. Gly381 provides a ligand contact to an anthocyanidin. 2 residues coordinate UDP-alpha-D-glucose: Asp382 and Gln383.

This sequence belongs to the UDP-glycosyltransferase family. As to expression, expressed in cotyledons. Not detected in flowers, leaves, roots and hypocotyls.

The enzyme catalyses a 3'-hydro-2'-hydroxy-beta-oxodihydrochalcone + UDP-alpha-D-glucose = a 3'-(beta-D-glucopyranosyl)-2'-hydroxy-beta-oxodihydrochalcone + UDP + H(+). UDP-glucose-dependent glucosyltransferase catalyzing the c-glucosylation of 2-hydroxyflavanones (2-hydroxynaringenin, 2-hydroxyeriodictyol and 2-hydroxypinocembrin) and phloretin. No activity with flavanones, flavones or flavonols. The sequence is that of UDP-glycosyltransferase 708C2 from Fagopyrum esculentum (Common buckwheat).